A 331-amino-acid polypeptide reads, in one-letter code: L-lactate dehydrogenase A chain (331 aa).

NAD(+) contacts are provided by residues 29–57 (GMVG…MEDK) and arginine 98. Substrate is bound by residues arginine 105, asparagine 137, and arginine 168. NAD(+) is bound at residue asparagine 137. Histidine 192 serves as the catalytic Proton acceptor. Substrate is bound at residue threonine 247.

This sequence belongs to the LDH/MDH superfamily. LDH family. Homotetramer.

Its subcellular location is the cytoplasm. It carries out the reaction (S)-lactate + NAD(+) = pyruvate + NADH + H(+). It participates in fermentation; pyruvate fermentation to lactate; (S)-lactate from pyruvate: step 1/1. Functionally, interconverts simultaneously and stereospecifically pyruvate and lactate with concomitant interconversion of NADH and NAD(+). The chain is L-lactate dehydrogenase A chain (ldha) from Notothenia neglecta (Yellowbelly rockcod).